We begin with the raw amino-acid sequence, 272 residues long: Putative phosphoenolpyruvate synthase regulatory protein (272 aa).

152–159 contributes to the ADP binding site; the sequence is GVSRCGKT.

Belongs to the pyruvate, phosphate/water dikinase regulatory protein family. PSRP subfamily.

It catalyses the reaction [pyruvate, water dikinase] + ADP = [pyruvate, water dikinase]-phosphate + AMP + H(+). The catalysed reaction is [pyruvate, water dikinase]-phosphate + phosphate + H(+) = [pyruvate, water dikinase] + diphosphate. Its function is as follows. Bifunctional serine/threonine kinase and phosphorylase involved in the regulation of the phosphoenolpyruvate synthase (PEPS) by catalyzing its phosphorylation/dephosphorylation. The polypeptide is Putative phosphoenolpyruvate synthase regulatory protein (Pseudomonas fluorescens (strain ATCC BAA-477 / NRRL B-23932 / Pf-5)).